The chain runs to 355 residues: Cobalt-precorrin-5B C(1)-methyltransferase (355 aa).

Belongs to the CbiD family.

The enzyme catalyses Co-precorrin-5B + S-adenosyl-L-methionine = Co-precorrin-6A + S-adenosyl-L-homocysteine. It participates in cofactor biosynthesis; adenosylcobalamin biosynthesis; cob(II)yrinate a,c-diamide from sirohydrochlorin (anaerobic route): step 6/10. Functionally, catalyzes the methylation of C-1 in cobalt-precorrin-5B to form cobalt-precorrin-6A. The polypeptide is Cobalt-precorrin-5B C(1)-methyltransferase (Parasynechococcus marenigrum (strain WH8102)).